A 260-amino-acid chain; its full sequence is ATP synthase subunit a (260 aa).

5 consecutive transmembrane segments (helical) span residues 27 to 47 (FWTVNIDSMIFSVLLGALFIW), 90 to 110 (IAPLGLTVFVWIFLMNLMDLI), 132 to 154 (SADVNITMSMALGVFFLILYYSI), 208 to 228 (LIFILIAGLLPWWSQWILSVP), and 230 to 250 (AIFHILIITLQAFIFMVLTIV).

This sequence belongs to the ATPase A chain family. In terms of assembly, F-type ATPases have 2 components, CF(1) - the catalytic core - and CF(0) - the membrane proton channel. CF(1) has five subunits: alpha(3), beta(3), gamma(1), delta(1), epsilon(1). CF(0) has three main subunits: a(1), b(2) and c(9-12). The alpha and beta chains form an alternating ring which encloses part of the gamma chain. CF(1) is attached to CF(0) by a central stalk formed by the gamma and epsilon chains, while a peripheral stalk is formed by the delta and b chains.

The protein resides in the cell inner membrane. Key component of the proton channel; it plays a direct role in the translocation of protons across the membrane. This is ATP synthase subunit a from Aeromonas hydrophila subsp. hydrophila (strain ATCC 7966 / DSM 30187 / BCRC 13018 / CCUG 14551 / JCM 1027 / KCTC 2358 / NCIMB 9240 / NCTC 8049).